We begin with the raw amino-acid sequence, 214 residues long: External core antigen (214 aa).

A signal peptide spans 1 to 19 (MQLFHLCLIISCTCPTVQA). The HBEAG stretch occupies residues 25 to 27 (GWL). The segment at 165-214 (NAPILSTLPETTVVRRRDRGRSPRRRTPSPRRRRSQSPRRRRSQSRESQC) is disordered. The segment covering 178–207 (VRRRDRGRSPRRRTPSPRRRRSQSPRRRRS) has biased composition (basic residues). One copy of the 1; half-length repeat lies at 186–192 (SPRRRTP). The 3 X 8 AA repeats of S-P-R-R-R-R-S-Q stretch occupies residues 186-208 (SPRRRTPSPRRRRSQSPRRRRSQ). Residues 186 to 214 (SPRRRTPSPRRRRSQSPRRRRSQSRESQC) constitute a propeptide that is removed on maturation. Tandem repeats lie at residues 193–200 (SPRRRRSQ) and 201–208 (SPRRRRSQ).

It belongs to the orthohepadnavirus precore antigen family. As to quaternary structure, homodimerizes. Post-translationally, phosphorylated. Cleaved by host furin.

The protein localises to the secreted. The protein resides in the host nucleus. Functionally, may regulate immune response to the intracellular capsid in acting as a T-cell tolerogen, by having an immunoregulatory effect which prevents destruction of infected cells by cytotoxic T-cells. This immune regulation may predispose to chronicity during perinatal infections and prevent severe liver injury during adult infections. This Homo sapiens (Human) protein is External core antigen.